We begin with the raw amino-acid sequence, 2221 residues long: Voltage-dependent L-type calcium channel subunit alpha-1C (2221 aa).

The segment at 1–20 is disordered; the sequence is MVNENTRMYIPEENHQGSNY. Topologically, residues 1 to 124 are cytoplasmic; that stretch reads MVNENTRMYI…RACISIVEWK (124 aa). The tract at residues 47-68 is calmodulin-binding; it reads GAALSWQAAIDAARQAKLMGSA. The segment at 73–98 is disordered; sequence ISTVSSTQRKRQQYGKPKKQGSTTAT. Residues 80–91 are compositionally biased toward basic residues; sequence QRKRQQYGKPKK. One copy of the I repeat lies at 111-408; the sequence is NPIRRACISI…LVLGVLSGEF (298 aa). Residues 125–143 traverse the membrane as a helical segment; the sequence is PFEIIILLTIFANCVALAI. Residues 144–158 are Extracellular-facing; it reads YIPFPEDDSNATNSN. N-linked (GlcNAc...) asparagine glycosylation occurs at Asn-153. The chain crosses the membrane as a helical span at residues 159–179; it reads LERVEYLFLIIFTVEAFLKVI. The Cytoplasmic portion of the chain corresponds to 180–188; sequence AYGLLFHPN. The helical transmembrane segment at 189 to 209 threads the bilayer; that stretch reads AYLRNGWNLLDFIIVVVGLFS. The Extracellular segment spans residues 210-232; the sequence is AILEQATKADGANALGGKGAGFD. The chain crosses the membrane as a helical span at residues 233–251; the sequence is VKALRAFRVLRPLRLVSGV. Topologically, residues 252 to 268 are cytoplasmic; the sequence is PSLQVVLNSIIKAMVPL. The helical transmembrane segment at 269-290 threads the bilayer; the sequence is LHIALLVLFVIIIYAIIGLELF. Over 291-350 the chain is Extracellular; that stretch reads MGKMHKTCYNQEGIADVPAEDDPSPCALETGHGRQCQNGTVCKPGWDGPKHGITNFDNFA. Intrachain disulfides connect Cys-298-Cys-326 and Cys-316-Cys-332. Asn-328 carries N-linked (GlcNAc...) asparagine glycosylation. The segment at residues 351–372 is an intramembrane region (pore-forming); that stretch reads FAMLTVFQCITMEGWTDVLYWV. The Selectivity filter of repeat I motif lies at 361 to 364; that stretch reads TMEG. Glu-363 serves as a coordination point for Ca(2+). The Extracellular segment spans residues 373-380; the sequence is NDAVGRDW. A helical transmembrane segment spans residues 381-401; sequence PWIYFVTLIIIGSFFVLNLVL. Over 402 to 524 the chain is Cytoplasmic; that stretch reads GVLSGEFSKE…RKCRAAVKSN (123 aa). An AID/alpha-interaction domain; mediates interaction with the beta subunit region spans residues 428–445; the sequence is QQLEEDLKGYLDWITQAE. The disordered stretch occupies residues 449–481; it reads PENEDEGMDEEKPRNMSMPTSETESVNTENVAG. A compositionally biased stretch (polar residues) spans 465–478; that stretch reads SMPTSETESVNTEN. The residue at position 469 (Ser-469) is a Phosphoserine. Phosphothreonine is present on Thr-476. The II repeat unit spans residues 510-756; the sequence is NRFCRRKCRA…VFLAIAVDNL (247 aa). A helical transmembrane segment spans residues 525-543; that stretch reads VFYWLVIFLVFLNTLTIAS. Residues 544 to 554 are Extracellular-facing; the sequence is EHYNQPNWLTE. Residues 555-575 form a helical membrane-spanning segment; sequence VQDTANKALLALFTAEMLLKM. Topologically, residues 576–586 are cytoplasmic; sequence YSLGLQAYFVS. A helical transmembrane segment spans residues 587 to 606; sequence LFNRFDCFVVCGGILETILV. At 607–615 the chain is on the extracellular side; it reads ETKIMSPLG. A helical membrane pass occupies residues 616 to 634; sequence ISVLRCVRLLRIFKITRYW. The Cytoplasmic portion of the chain corresponds to 635–653; it reads NSLSNLVASLLNSVRSIAS. A helical transmembrane segment spans residues 654-673; the sequence is LLLLLFLFIIIFSLLGMQLF. The Extracellular segment spans residues 674–693; sequence GGKFNFDEMQTRRSTFDNFP. The segment at residues 694-715 is an intramembrane region (pore-forming); it reads QSLLTVFQILTGEDWNSVMYDG. The Selectivity filter of repeat II signature appears at 704 to 707; that stretch reads TGED. Position 706 (Glu-706) interacts with Ca(2+). Topologically, residues 716 to 725 are extracellular; that stretch reads IMAYGGPSFP. A helical membrane pass occupies residues 726–745; sequence GMLVCIYFIILFICGNYILL. Residues 746–900 are Cytoplasmic-facing; the sequence is NVFLAIAVDN…LQCHRIVNDT (155 aa). The tract at residues 764–861 is disordered; the sequence is SAQKEEEEEK…EMPVGPRPRP (98 aa). Positions 783-792 are enriched in basic and acidic residues; sequence SPEKKQELVE. Phosphoserine occurs at positions 808 and 815. An interaction with STAC2 region spans residues 829–876; the sequence is NENEDKSPYPNPETTGEEDEEEPEMPVGPRPRPLSELHLKEKAVPMPE. A compositionally biased stretch (acidic residues) spans 843–852; sequence TGEEDEEEPE. The stretch at 887–1189 is one III repeat; sequence NRFRLQCHRI…IFVGFVIVTF (303 aa). A helical membrane pass occupies residues 901–919; the sequence is IFTNLILFFILLSSISLAA. The Extracellular portion of the chain corresponds to 920–931; that stretch reads EDPVQHTSFRNH. The chain crosses the membrane as a helical span at residues 932-952; that stretch reads ILFYFDIVFTTIFTIEIALKI. Residues 953–987 lie on the Cytoplasmic side of the membrane; sequence LGNADYVFTSIFTLEIILKMTAYGAFLHKGSFCRN. A helical transmembrane segment spans residues 988–1006; the sequence is YFNILDLLVVSVSLISFGI. Residues 1007–1013 lie on the Extracellular side of the membrane; it reads QSSAINV. A helical transmembrane segment spans residues 1014 to 1032; the sequence is VKILRVLRVLRPLRAINRA. At 1033-1051 the chain is on the cytoplasmic side; that stretch reads KGLKHVVQCVFVAIRTIGN. A helical transmembrane segment spans residues 1052–1071; the sequence is IVIVTTLLQFMFACIGVQLF. At 1072 to 1121 the chain is on the extracellular side; that stretch reads KGKLYTCSDSSKQTEAECKGNYITYKDGEVDHPIIQPRSWENSKFDFDNV. A disulfide bridge connects residues Cys-1078 and Cys-1089. The dihydropyridine binding stretch occupies residues 1109–1198; it reads RSWENSKFDF…FQEQGEQEYK (90 aa). Positions 1122–1142 form an intramembrane region, pore-forming; it reads LAAMMALFTVSTFEGWPELLY. The Selectivity filter of repeat III signature appears at 1133–1136; that stretch reads TFEG. A Ca(2+)-binding site is contributed by Glu-1135. Residues 1143 to 1159 lie on the Extracellular side of the membrane; it reads RSIDSHTEDKGPIYNYR. A helical transmembrane segment spans residues 1160-1181; sequence VEISIFFIIYIIIIAFFMMNIF. At 1182–1239 the chain is on the cytoplasmic side; that stretch reads VGFVIVTFQEQGEQEYKNCELDKNQRQCVEYALKARPLRRYIPKNQHQYKVWYVVNST. The IV repeat unit spans residues 1226–1527; it reads NQHQYKVWYV…LFVAVIMDNF (302 aa). The helical transmembrane segment at 1240-1261 threads the bilayer; sequence YFEYLMFVLILLNTICLAMQHY. At 1262–1269 the chain is on the extracellular side; the sequence is GQSCLFKI. A helical transmembrane segment spans residues 1270 to 1291; it reads AMNILNMLFTGLFTVEMILKLI. Topologically, residues 1292–1301 are cytoplasmic; it reads AFKPKGYFSD. A helical transmembrane segment spans residues 1302-1321; sequence PWNVFDFLIVIGSIIDVILS. Residues 1322-1372 are Extracellular-facing; it reads ETNHYFCDAWNTFDALIVVGSIVDIAITEVNPAEHTQCSPSMNAEENSRIS. The chain crosses the membrane as a helical span at residues 1373–1391; the sequence is ITFFRLFRVMRLVKLLSRG. Residues 1392 to 1409 are Cytoplasmic-facing; the sequence is EGIRTLLWTFIKSFQALP. Residues 1410–1430 traverse the membrane as a helical segment; that stretch reads YVALLIVMLFFIYAVIGMQVF. Topologically, residues 1431–1452 are extracellular; it reads GKIALNDTTEINRNNNFQTFPQ. N-linked (GlcNAc...) asparagine glycosylation is present at Asn-1436. Residues 1453–1471 constitute an intramembrane region (pore-forming); the sequence is AVLLLFRCATGEAWQDIML. A Selectivity filter of repeat IV motif is present at residues 1462–1465; sequence TGEA. Residues 1472–1499 are Extracellular-facing; the sequence is ACMPGKKCAPESEPSNSTEGETPCGSSF. Residues 1478-1546 are dihydropyridine binding; sequence KCAPESEPSN…LGPHHLDEFK (69 aa). A disulfide bridge links Cys-1479 with Cys-1495. Asn-1487 is a glycosylation site (N-linked (GlcNAc...) asparagine). Residues 1492–1534 are phenylalkylamine binding; that stretch reads ETPCGSSFAVFYFISFYMLCAFLIINLFVAVIMDNFDYLTRDW. A helical membrane pass occupies residues 1500–1524; that stretch reads AVFYFISFYMLCAFLIINLFVAVIM. The Cytoplasmic segment spans residues 1525–2221; that stretch reads DNFDYLTRDW…QDSRVYVSSL (697 aa). The important for interaction with STAC1, STAC2 and STAC3 stretch occupies residues 1659–1686; that stretch reads DEVTVGKFYATFLIQEYFRKFKKRKEQG. Residues 1665-1685 are calmodulin-binding IQ region; that stretch reads KFYATFLIQEYFRKFKKRKEQ. An important for localization in at the junctional membrane region spans residues 1699-1718; sequence LQAGLRTLHDIGPEIRRAIS. Phosphoserine occurs at positions 1718 and 1739. Positions 1778–1847 are disordered; that stretch reads INKAGSSQGD…TVEGHGPPLS (70 aa). Residues 1799-1811 are compositionally biased toward polar residues; the sequence is STFTPSSYSSTGS. Over residues 1812–1822 the composition is skewed to low complexity; the sequence is NANINNANNTA. A Phosphoserine; by PKA modification is found at Ser-1981. 2 disordered regions span residues 2029 to 2063 and 2186 to 2221; these read ASFP…VESS and AGQD…VSSL.

This sequence belongs to the calcium channel alpha-1 subunit (TC 1.A.1.11) family. CACNA1C subfamily. In terms of assembly, component of a calcium channel complex consisting of a pore-forming alpha subunit (CACNA1C) and ancillary beta, gamma and delta subunits. The channel complex contains alpha, beta, gamma and delta subunits in a 1:1:1:1 ratio, i.e. it contains only one of each type of subunit. CACNA1C channel activity is modulated by ancillary subunits, such as CACNB1, CACNB2, CACNB3, CACNA2D1 and CACNA2D4. Interacts with the gamma subunits CACNG4, CACNG6, CACNG7 and CACNG8. Interacts with CACNB1. Interacts with CACNB2. Identified in a complex with CACNA2D4 and CACNB3. Interacts with CACNB3. Interacts with CACNA2D1. Interacts with CACNA2D4. Interacts with CALM1. Interacts (via the N-terminus and the C-terminal C and IQ motifs) with CABP1; this inhibits Ca(2+)-dependent channel inactivation. The binding via the C motif is calcium independent whereas the binding via IQ requires the presence of calcium and is mutually exclusive with calmodulin binding. The binding to the cytoplasmic N-terminal domain is calcium independent but is essential for the channel modulation. Interacts (via C-terminal CDB motif) with CABP5; in a calcium-dependent manner. Interacts with CIB1; the interaction increases upon cardiomyocytes hypertrophy. Interacts with STAC2 and STAC3; this inhibits channel inactivation. (Microbial infection) Interacts with influenzavirus H1 hemagglutinin. In terms of processing, phosphorylation by PKA at Ser-1981 activates the channel. Elevated levels of blood glucose lead to increased phosphorylation by PKA. Detected throughout the brain, including hippocampus, cerebellum and amygdala, throughout the heart and vascular system, including ductus arteriosus, in urinary bladder, and in retina and sclera in the eye. Expressed in brain, heart, jejunum, ovary, pancreatic beta-cells and vascular smooth muscle. Overall expression is reduced in atherosclerotic vascular smooth muscle.

The protein localises to the cell membrane. Its subcellular location is the sarcolemma. It localises to the perikaryon. It is found in the postsynaptic density membrane. The protein resides in the cell projection. The protein localises to the dendrite. Its subcellular location is the T-tubule. It catalyses the reaction Ca(2+)(in) = Ca(2+)(out). Its activity is regulated as follows. Inhibited by dihydropyridines (DHP), such as isradipine. Inhibited by nifedipine. Channel activity is regulated by Ca(2+) and calmodulin. Binding of STAC1, STAC2 or STAC3 to a region that overlaps with the calmodulin binding site inhibits channel inactivation by Ca(2+) and calmodulin. Binding of calmodulin or CABP1 at the same regulatory sites results in opposite effects on the channel function. Shear stress and pressure increases calcium channel activity. Functionally, pore-forming, alpha-1C subunit of the voltage-gated calcium channel that gives rise to L-type calcium currents. Mediates influx of calcium ions into the cytoplasm, and thereby triggers calcium release from the sarcoplasm. Plays an important role in excitation-contraction coupling in the heart. Required for normal heart development and normal regulation of heart rhythm. Required for normal contraction of smooth muscle cells in blood vessels and in the intestine. Essential for normal blood pressure regulation via its role in the contraction of arterial smooth muscle cells. Long-lasting (L-type) calcium channels belong to the 'high-voltage activated' (HVA) group. In terms of biological role, pore-forming, alpha-1C subunit of the voltage-gated calcium channel that gives rise to L-type calcium currents. Its function is as follows. (Microbial infection) Acts as a receptor for Influenzavirus. May play a critical role in allowing virus entry when sialylated and expressed on lung tissues. This chain is Voltage-dependent L-type calcium channel subunit alpha-1C (CACNA1C), found in Homo sapiens (Human).